The following is a 249-amino-acid chain: 2,3-bisphosphoglycerate-dependent phosphoglycerate mutase (249 aa).

Residues 9–16 (RHGQSQWN), 22–23 (TG), R61, 88–91 (ERHY), K99, 115–116 (RR), and 184–185 (GN) each bind substrate. H10 (tele-phosphohistidine intermediate) is an active-site residue. E88 (proton donor/acceptor) is an active-site residue.

This sequence belongs to the phosphoglycerate mutase family. BPG-dependent PGAM subfamily. As to quaternary structure, homodimer.

The enzyme catalyses (2R)-2-phosphoglycerate = (2R)-3-phosphoglycerate. Its pathway is carbohydrate degradation; glycolysis; pyruvate from D-glyceraldehyde 3-phosphate: step 3/5. Its function is as follows. Catalyzes the interconversion of 2-phosphoglycerate and 3-phosphoglycerate. The chain is 2,3-bisphosphoglycerate-dependent phosphoglycerate mutase from Xanthomonas campestris pv. campestris (strain B100).